A 396-amino-acid chain; its full sequence is Purine ribonucleoside efflux pump NepI (396 aa).

Over 1–21 the chain is Cytoplasmic; it reads MSEFIAENRGADAITRPNWSA. A helical transmembrane segment spans residues 22-42; sequence VFSVAFCVACLIIVEFLPVSL. Residues 43 to 54 lie on the Periplasmic side of the membrane; it reads LTPMAQDLGISE. The helical transmembrane segment at 55 to 75 threads the bilayer; sequence GVAGQSVTVTAFVAMFASLFI. Topologically, residues 76–85 are cytoplasmic; the sequence is TQTIQATDRR. The helical transmembrane segment at 86 to 106 threads the bilayer; it reads YVVILFAVLLTLSCLLVSFAN. Ser107 is a topological domain (periplasmic). A helical membrane pass occupies residues 108-128; sequence FSLLLIGRACLGLALGGFWAM. Residues 129-147 are Cytoplasmic-facing; that stretch reads SASLTMRLVPPRTVPKALS. A helical transmembrane segment spans residues 148–168; sequence VIFGAVSIALVIAAPLGCFLG. Over 169 to 175 the chain is Periplasmic; that stretch reads ELIGWRN. Residues 176-196 traverse the membrane as a helical segment; sequence VFNAAAAMGVLCIFWIIKSLP. The Cytoplasmic portion of the chain corresponds to 197–215; that stretch reads SLPGEPSHQKQNTFRLLQR. A helical transmembrane segment spans residues 216 to 236; sequence PGVMAGMIAIFMSFAGQFAFF. Topologically, residues 237-255 are periplasmic; sequence TYIRPVYMTLAGFGVDGLT. The chain crosses the membrane as a helical span at residues 256–276; sequence LVLLSFGIASFVGTSLSSFIL. At 277–281 the chain is on the cytoplasmic side; sequence KRSVK. A helical membrane pass occupies residues 282-302; sequence LALAGAPFVLALSALVLTLWG. The Periplasmic segment spans residues 303 to 305; it reads SDK. The chain crosses the membrane as a helical span at residues 306–326; it reads IVATGVAIIWGLTFALIPVGW. Topologically, residues 327–343 are cytoplasmic; it reads STWITRSLADQAEKAGS. The helical transmembrane segment at 344 to 364 threads the bilayer; it reads IQVAVIQLANTCGAAIGGYAL. Topologically, residues 365-366 are periplasmic; sequence DN. A helical transmembrane segment spans residues 367 to 387; that stretch reads IGLTSPLMLSGTLMLLTALLV. Residues 388–396 lie on the Cytoplasmic side of the membrane; it reads TAKVKMKKS.

It belongs to the major facilitator superfamily. DHA1 family. NepI (TC 2.A.1.2.26) subfamily.

Its subcellular location is the cell inner membrane. The enzyme catalyses inosine(in) + H(+)(out) = inosine(out) + H(+)(in). It catalyses the reaction guanosine(in) + H(+)(out) = guanosine(out) + H(+)(in). Involved in the efflux of purine ribonucleosides, such as inosine and guanosine. The polypeptide is Purine ribonucleoside efflux pump NepI (Escherichia coli O157:H7).